We begin with the raw amino-acid sequence, 590 residues long: Aspartate--tRNA(Asp/Asn) ligase (590 aa).

Glu175 is a binding site for L-aspartate. The tract at residues Gln199–Lys202 is aspartate. Residues Arg221 and His450 each contribute to the L-aspartate site. Arg221 to Glu223 lines the ATP pocket. Glu484 contributes to the ATP binding site. Position 491 (Arg491) interacts with L-aspartate. Residue Gly536–Arg539 coordinates ATP.

Belongs to the class-II aminoacyl-tRNA synthetase family. Type 1 subfamily. As to quaternary structure, homodimer.

Its subcellular location is the cytoplasm. The catalysed reaction is tRNA(Asx) + L-aspartate + ATP = L-aspartyl-tRNA(Asx) + AMP + diphosphate. Aspartyl-tRNA synthetase with relaxed tRNA specificity since it is able to aspartylate not only its cognate tRNA(Asp) but also tRNA(Asn). Reaction proceeds in two steps: L-aspartate is first activated by ATP to form Asp-AMP and then transferred to the acceptor end of tRNA(Asp/Asn). The sequence is that of Aspartate--tRNA(Asp/Asn) ligase from Rhodopseudomonas palustris (strain BisB18).